A 496-amino-acid polypeptide reads, in one-letter code: Alanine aminotransferase 1 (496 aa).

Alanine 2 bears the N-acetylalanine mark. Threonine 22 is subject to Phosphothreonine. Lysine 314 carries the post-translational modification N6-(pyridoxal phosphate)lysine.

The protein belongs to the class-I pyridoxal-phosphate-dependent aminotransferase family. Alanine aminotransferase subfamily. Homodimer. Pyridoxal 5'-phosphate serves as cofactor.

The protein resides in the cytoplasm. It catalyses the reaction L-alanine + 2-oxoglutarate = pyruvate + L-glutamate. It functions in the pathway amino-acid degradation; L-alanine degradation via transaminase pathway; pyruvate from L-alanine: step 1/1. Catalyzes the reversible transamination between alanine and 2-oxoglutarate to form pyruvate and glutamate. Participates in cellular nitrogen metabolism and also in liver gluconeogenesis starting with precursors transported from skeletal muscles. The protein is Alanine aminotransferase 1 (GPT) of Bos taurus (Bovine).